The chain runs to 91 residues: MARVTVQDAVEKIGNRFDLVLVAARRARQMQTGGKEPLVPEENDKTTVLALREIEEGLINNQILDVRERQEQQEQEAAELQAVTAIAEGRR.

It belongs to the RNA polymerase subunit omega family. The RNAP catalytic core consists of 2 alpha, 1 beta, 1 beta' and 1 omega subunit. When a sigma factor is associated with the core the holoenzyme is formed, which can initiate transcription.

It catalyses the reaction RNA(n) + a ribonucleoside 5'-triphosphate = RNA(n+1) + diphosphate. In terms of biological role, promotes RNA polymerase assembly. Latches the N- and C-terminal regions of the beta' subunit thereby facilitating its interaction with the beta and alpha subunits. The protein is DNA-directed RNA polymerase subunit omega of Edwardsiella ictaluri (strain 93-146).